We begin with the raw amino-acid sequence, 89 residues long: UPF0298 protein GK1096 (89 aa).

This sequence belongs to the UPF0298 family.

Its subcellular location is the cytoplasm. The chain is UPF0298 protein GK1096 from Geobacillus kaustophilus (strain HTA426).